Reading from the N-terminus, the 54-residue chain is Apelin receptor early endogenous ligand (54 aa).

Residues 1–23 form the signal peptide; it reads MRFQPLFWVFFIFAMSLLFISEQ.

Belongs to the Elabela/Toddler family. Interacts with APLNR. As to expression, expressed in the placenta. Expressed in syncytiotrophoblasts of the placenta labyrinth at 10.5 dpc. Expressed in placental chorionic trophoblasts (at protein level). Expressed in a small population of epiblast cells in the distal half of the embryo at 7 dpc. Expressed in newly formed definitive endoderm cells in the proximal half of the embryo, while it is not present in extra-embryonic endoderm at 7.5 dpc. This expression pattern then changes to the ventral aspect of the developing foregut pocket and the entire hindgut pocket at 8.5 dpc, before becoming restricted to the foregut overlying the heart and the posterior-most hindgut. Not detected in endothelial precursor cells of the yolk sac at 8 dpc. Expressed in extraembryonic tissues as well as in the chorion at 8.25 dpc. Expressed in endometrial stroma of the uterus of pregnant mice at 8.5 dpc. Expressed in the developing heart, caudal neural tube and trophobasts at 9 dpc. Expressed in the chorionic plate of the chorioallantoic placenta at 9 dpc. Expressed in the posterior half of the ventral neural tube at 9.25 dpc. Expressed in trophoblast cells at the periphery of the placenta at 9.5 dpc. Expressed in collecting ducts of the kidney of pregnant mice at 10.5 dpc. Expressed in the epicardium of the developing heart at 11.5 dpc. Expressed weakly in the adult heart. Expressed in endothelial cells and fibroblasts and weakly in cardiomyocytes.

It localises to the secreted. The protein resides in the extracellular space. Functionally, peptide hormone that functions as endogenous ligand for the G-protein-coupled apelin receptor (APLNR/APJ), that plays a role in the regulation of normal cardiovascular function and fluid homeostasis. Functions as a balanced agonist activating both G(i) protein pathway and beta-arrestin pathway of APLNR. Downstream G proteins activation, apelin can inhibit cAMP production and activate key intracellular effectors such as ERKs. On the other hand, APLNR activation induces beta-arrestin recruitment to the membrane leading to desensitization and internalization of the receptor. Required for mesendodermal differentiation, blood vessels formation and heart morphogenesis during early development and for adult cardiovascular homeostasis. Acts as a motogen by promoting mesendodermal cell migration during gastrulation by binding and activating APLNR. Acts as an early embryonic regulator of cellular movement with a role in migration and development of cardiac progenitor cells. May act as a chemoattractant for the activation of angioblast migration toward the embryonic midline, i.e. the position of the future vessel formation, during vasculogenesis. Positively regulates sinus venosus (SV)-derived endothelial cells migration into the developing heart to promote coronary blood vessel sprouting. Plays a role in placental vascular development; promotes placental trophoblast invasion and spiral artery remodeling in the uterus. Involved in the regulation of maternal cardiovascular homeostasis to prevent gestational hypertension and for potent cardioprotective functions during heart failure. Mediates myocardial contractility in an ERK1/2-dependent manner. The polypeptide is Apelin receptor early endogenous ligand (Mus musculus (Mouse)).